The chain runs to 91 residues: N(2)-fixation sustaining protein CowN (91 aa).

This sequence belongs to the CowN family.

Is required to sustain N(2)-dependent growth in the presence of low levels of carbon monoxide (CO). Probably acts by protecting the N(2) fixation ability of the nitrogenase complex, which is inactivated in the presence of CO. The polypeptide is N(2)-fixation sustaining protein CowN (Gluconacetobacter diazotrophicus (strain ATCC 49037 / DSM 5601 / CCUG 37298 / CIP 103539 / LMG 7603 / PAl5)).